Reading from the N-terminus, the 201-residue chain is Probable quinol oxidase subunit 3 (201 aa).

Transmembrane regions (helical) follow at residues L20–L40, L62–Y82, L91–I111, F133–C153, and F180–S200.

Belongs to the cytochrome c oxidase subunit 3 family.

The protein resides in the cell membrane. It carries out the reaction 2 a quinol + O2 = 2 a quinone + 2 H2O. In terms of biological role, catalyzes quinol oxidation with the concomitant reduction of oxygen to water. This is Probable quinol oxidase subunit 3 (qoxC) from Staphylococcus saprophyticus subsp. saprophyticus (strain ATCC 15305 / DSM 20229 / NCIMB 8711 / NCTC 7292 / S-41).